Reading from the N-terminus, the 201-residue chain is ATP-dependent Clp protease proteolytic subunit (201 aa).

The active-site Nucleophile is the Ser-101. His-126 is a catalytic residue.

It belongs to the peptidase S14 family. As to quaternary structure, component of the chloroplastic Clp protease core complex.

It localises to the plastid. It is found in the chloroplast stroma. The catalysed reaction is Hydrolysis of proteins to small peptides in the presence of ATP and magnesium. alpha-casein is the usual test substrate. In the absence of ATP, only oligopeptides shorter than five residues are hydrolyzed (such as succinyl-Leu-Tyr-|-NHMec, and Leu-Tyr-Leu-|-Tyr-Trp, in which cleavage of the -Tyr-|-Leu- and -Tyr-|-Trp bonds also occurs).. Cleaves peptides in various proteins in a process that requires ATP hydrolysis. Has a chymotrypsin-like activity. Plays a major role in the degradation of misfolded proteins. In Staurastrum punctulatum (Green alga), this protein is ATP-dependent Clp protease proteolytic subunit.